A 432-amino-acid polypeptide reads, in one-letter code: Ornithine decarboxylase (432 aa).

Lys-98 carries the post-translational modification N6-(pyridoxal phosphate)lysine. Pyridoxal 5'-phosphate contacts are provided by residues Ser-229, Gly-266, and 296 to 299 (EPGR). 341–342 (FD) contacts substrate. Cys-377 (proton donor; shared with dimeric partner) is an active-site residue. Residue Asp-378 coordinates substrate. Pyridoxal 5'-phosphate is bound at residue Tyr-407.

This sequence belongs to the Orn/Lys/Arg decarboxylase class-II family. In terms of assembly, homodimer. Only the dimer is catalytically active, as the active sites are constructed of residues from both monomers. Pyridoxal 5'-phosphate is required as a cofactor.

The protein resides in the cytoplasm. The enzyme catalyses L-ornithine + H(+) = putrescine + CO2. Its pathway is amine and polyamine biosynthesis; putrescine biosynthesis via L-ornithine pathway; putrescine from L-ornithine: step 1/1. Inhibited by antizyme (AZ) OAZ1 in response to polyamine levels. AZ inhibits the assembly of the functional homodimer by binding to ODC monomers and targeting them for ubiquitin-independent proteolytic destruction by the 26S proteasome. Functionally, catalyzes the first and rate-limiting step of polyamine biosynthesis that converts ornithine into putrescine, which is the precursor for the polyamines, spermidine and spermine. Polyamines are essential for cell proliferation and are implicated in cellular processes, ranging from DNA replication to apoptosis. The sequence is that of Ornithine decarboxylase (spe1) from Schizosaccharomyces pombe (strain 972 / ATCC 24843) (Fission yeast).